A 992-amino-acid polypeptide reads, in one-letter code: MNNSVYGVAFRSLSTGDEKLYKEATRFYHSLGFQTVKLYDNFKNHDDSNLIVGTSKNSVKECWLESFKLSELDSQGFRVPQQEASNQLQTDGVMIKLRLVDTEPLNQTADTVVYYTVSLDEVSKIGERVDDHNVKLVDPLGNVVLVTDSHDGKELNASEFIAPKDSSVEQKITVELVDKDSKKKKIAVMTSGGDSQGMNAAVRAVVRSSIYYGCDVYAVYEGYEGLVKGGDYLRKMEWKDVRGWLSEGGTLIGTARSKEFRERWGRKQACSNLIDQGIDALVVIGGDGSLTGADLFRSEWPSLVEELVKDGKFTEDEVALYQNLTIVGMVGSIDNDMSGTDSTIGAYSALERICEMVDYIDATAKSHSRAFVVEVMGRHCGWLGLMSGIATAADYIFIPERAAPHGKWQDELKRVCQRHREKGRRNNTVIVAEGALDDQLNPITAEQVKDVLVELGLDTKITTLGHVQRGGTAVAHDRWLATLQGVDAVKAILNMTPETPSPLIGILENKVIRMPLVESVKLTKQVAAAIEAKDFDKAISLRDTEFIELYSNFMSTTVNDDGSQLLPEADRLNIAIVHVGAPSAALNAATRAATLYCLAHGHRPYAITNGFSGLIQTGQVKELSWIDVEDWHNLGGSEIGTNRSVAAEDMGTIAYHFQKNKFDGVIILGGFEGFKSLKQLRDGRDQYPIFNIPMCLIPATVSNNVPGTEYSLGSDTCLNALVKYTDAIKQSASSTRRRVFVVEVQGGHSGYVASFTGLVTGAVSVYTPENAINLKTIQEDLALLKESFKHEQGETRNGKLVIRNEMASDVYTTELLADIITEQSNDRFGVRTAIPGHVQQGGVPSSKDRVIASRFAVKCVKFIEQWNKKNTAADNEDFKILRFNYVNGVKQYTVLDEDLSAAVICVNGSKISFKPIAHIWENETNIELRKGQEIHWEEYNEIGDILSGRSMLRRKIQKEQQEESSLPSVADTPLSSVTVSTSAAKEDSALYV.

The tract at residues 1 to 558 (MNNSVYGVAF…LYSNFMSTTV (558 aa)) is N-terminal catalytic PFK domain 1. ATP-binding positions include glycine 193, 256-257 (RS), and 286-289 (GDGS). Aspartate 287 provides a ligand contact to Mg(2+). Beta-D-fructose 6-phosphate is bound by residues 332-334 (SID), arginine 369, 376-378 (MGR), glutamate 433, lysine 460, and 466-469 (HVQR). Aspartate 334 acts as the Proton acceptor in catalysis. The interval 559 to 572 (NDDGSQLLPEADRL) is interdomain linker. The interval 573-992 (NIAIVHVGAP…AAKEDSALYV (420 aa)) is C-terminal regulatory PFK domain 2. Beta-D-fructose 2,6-bisphosphate contacts are provided by residues arginine 643, 700–704 (TVSNN), arginine 738, 745–747 (QGG), glutamate 805, arginine 831, 837–840 (HVQQ), and arginine 929.

It belongs to the phosphofructokinase type A (PFKA) family. ATP-dependent PFK group I subfamily. Eukaryotic two domain clade 'E' sub-subfamily. In terms of assembly, heterooctamer of 4 alpha and 4 beta chains. Requires Mg(2+) as cofactor.

It is found in the cytoplasm. It carries out the reaction beta-D-fructose 6-phosphate + ATP = beta-D-fructose 1,6-bisphosphate + ADP + H(+). Its pathway is carbohydrate degradation; glycolysis; D-glyceraldehyde 3-phosphate and glycerone phosphate from D-glucose: step 3/4. Allosterically activated by ADP, AMP, or fructose 2,6-bisphosphate, and allosterically inhibited by ATP or citrate. Catalyzes the phosphorylation of D-fructose 6-phosphate to fructose 1,6-bisphosphate by ATP, the first committing step of glycolysis. The sequence is that of ATP-dependent 6-phosphofructokinase subunit alpha (PFK1) from Kluyveromyces lactis (strain ATCC 8585 / CBS 2359 / DSM 70799 / NBRC 1267 / NRRL Y-1140 / WM37) (Yeast).